A 57-amino-acid polypeptide reads, in one-letter code: Putative antitoxin VapB4 (57 aa).

Possibly the antitoxin component of a type II toxin-antitoxin (TA) system. Its cognate toxin is VapC4 (Potential). The protein is Putative antitoxin VapB4 (vapB4) of Methanocaldococcus jannaschii (strain ATCC 43067 / DSM 2661 / JAL-1 / JCM 10045 / NBRC 100440) (Methanococcus jannaschii).